Consider the following 400-residue polypeptide: Phosphoglycerate kinase (400 aa).

Substrate is bound by residues 21 to 23 (DLN), Arg-36, 59 to 62 (HLGR), Arg-116, and Arg-149. Residues Lys-200, Glu-317, and 343 to 346 (GGDT) each bind ATP.

This sequence belongs to the phosphoglycerate kinase family. Monomer.

The protein resides in the cytoplasm. It carries out the reaction (2R)-3-phosphoglycerate + ATP = (2R)-3-phospho-glyceroyl phosphate + ADP. It functions in the pathway carbohydrate degradation; glycolysis; pyruvate from D-glyceraldehyde 3-phosphate: step 2/5. This chain is Phosphoglycerate kinase, found in Blochmanniella floridana.